The sequence spans 370 residues: Putative agmatine deiminase (370 aa).

The Amidino-cysteine intermediate role is filled by C361.

Belongs to the agmatine deiminase family.

It carries out the reaction agmatine + H2O = N-carbamoylputrescine + NH4(+). This chain is Putative agmatine deiminase, found in Shewanella baltica (strain OS155 / ATCC BAA-1091).